A 426-amino-acid polypeptide reads, in one-letter code: AP-1 complex subunit mu-1 (426 aa).

The 259-residue stretch at 167–425 (KNEVFLDVIE…TQNGTEYSIR (259 aa)) folds into the MHD domain.

Belongs to the adaptor complexes medium subunit family. In terms of assembly, adaptor protein complex 1 (AP-1) is a heterotetramer composed of two large adaptins (gamma-type subunit apl4 and beta-type subunit apl2), a medium adaptin (mu-type subunit apm1) and a small adaptin (sigma-type subunit aps1). AP-1 interacts with clathrin. Interacts with sad1.

The protein resides in the cytoplasmic vesicle. The protein localises to the clathrin-coated vesicle membrane. It localises to the membrane. Its subcellular location is the clathrin-coated pit. In terms of biological role, component of the adaptor complexes which link clathrin to receptors in coated vesicles. Clathrin-associated protein complexes are believed to interact with the cytoplasmic tails of membrane proteins, leading to their selection and concentration. In Schizosaccharomyces pombe (strain 972 / ATCC 24843) (Fission yeast), this protein is AP-1 complex subunit mu-1 (apm1).